Consider the following 235-residue polypeptide: Pyridoxine/pyridoxamine 5'-phosphate oxidase (235 aa).

Residues 30–33 and lysine 88 each bind substrate; that span reads RQEY. FMN contacts are provided by residues 83–88, 98–99, arginine 104, lysine 105, and glutamine 127; these read RTVLLK and YT. Residues tyrosine 145, arginine 149, and serine 153 each coordinate substrate. Residues 162–163 and tryptophan 207 each bind FMN; that span reads QS. 213-215 contacts substrate; sequence RLH. Arginine 217 is a binding site for FMN.

Belongs to the pyridoxamine 5'-phosphate oxidase family. As to quaternary structure, homodimer. FMN serves as cofactor.

The enzyme catalyses pyridoxamine 5'-phosphate + O2 + H2O = pyridoxal 5'-phosphate + H2O2 + NH4(+). The catalysed reaction is pyridoxine 5'-phosphate + O2 = pyridoxal 5'-phosphate + H2O2. It functions in the pathway cofactor metabolism; pyridoxal 5'-phosphate salvage; pyridoxal 5'-phosphate from pyridoxamine 5'-phosphate: step 1/1. It participates in cofactor metabolism; pyridoxal 5'-phosphate salvage; pyridoxal 5'-phosphate from pyridoxine 5'-phosphate: step 1/1. Its function is as follows. Catalyzes the oxidation of either pyridoxine 5'-phosphate (PNP) or pyridoxamine 5'-phosphate (PMP) into pyridoxal 5'-phosphate (PLP). This Bacteroides fragilis (strain YCH46) protein is Pyridoxine/pyridoxamine 5'-phosphate oxidase.